Reading from the N-terminus, the 88-residue chain is UPF0250 protein Shewmr4_0986 (88 aa).

Belongs to the UPF0250 family.

This is UPF0250 protein Shewmr4_0986 from Shewanella sp. (strain MR-4).